The primary structure comprises 467 residues: Glutamine synthetase (467 aa).

A GS beta-grasp domain is found at 11–95; sequence HDVKWIDLRF…IVCDIIEPST (85 aa). The GS catalytic domain occupies 103 to 467; that stretch reads PRAIARRAEE…PLEYDLYYSV (365 aa). 2 residues coordinate Mg(2+): E128 and E130. E206 serves as a coordination point for ATP. Mg(2+)-binding residues include E211 and E219. Residues 263–264 and G264 each bind L-glutamate; that span reads NG. H268 is a Mg(2+) binding site. Residues 270-272 and S272 each bind ATP; that span reads HMS. 3 residues coordinate L-glutamate: R320, E326, and R338. ATP-binding residues include R338, R343, and K351. E356 lines the Mg(2+) pocket. An L-glutamate-binding site is contributed by R358. Y396 bears the O-AMP-tyrosine mark.

This sequence belongs to the glutamine synthetase family. As to quaternary structure, oligomer of 12 subunits arranged in the form of two hexameric ring. Requires Mg(2+) as cofactor.

Its subcellular location is the cytoplasm. It carries out the reaction L-glutamate + NH4(+) + ATP = L-glutamine + ADP + phosphate + H(+). With respect to regulation, the activity of this enzyme could be controlled by adenylation under conditions of abundant glutamine. In terms of biological role, catalyzes the ATP-dependent biosynthesis of glutamine from glutamate and ammonia. The polypeptide is Glutamine synthetase (Azotobacter vinelandii).